The chain runs to 283 residues: Movement protein (283 aa).

The protein belongs to the cucumovirus movement protein family.

Its subcellular location is the host cell junction. The protein resides in the host plasmodesma. Functionally, transports viral genome to neighboring plant cells directly through plasmosdesmata, without any budding. The movement protein allows efficient cell to cell propagation, by bypassing the host cell wall barrier. Acts by forming a tubular structure at the host plasmodesmata, enlarging it enough to allow free passage of virion capsids. The sequence is that of Movement protein from Cucumis sativus (Cucumber).